Here is a 122-residue protein sequence, read N- to C-terminus: Large ribosomal subunit protein uL14 (122 aa).

It belongs to the universal ribosomal protein uL14 family. In terms of assembly, part of the 50S ribosomal subunit. Forms a cluster with proteins L3 and L19. In the 70S ribosome, L14 and L19 interact and together make contacts with the 16S rRNA in bridges B5 and B8.

Binds to 23S rRNA. Forms part of two intersubunit bridges in the 70S ribosome. The sequence is that of Large ribosomal subunit protein uL14 from Acidovorax sp. (strain JS42).